The following is a 427-amino-acid chain: 3-phosphoshikimate 1-carboxyvinyltransferase (427 aa).

Residues lysine 20, serine 21, and arginine 25 each contribute to the 3-phosphoshikimate site. Lysine 20 is a phosphoenolpyruvate binding site. Residues glycine 92 and arginine 120 each coordinate phosphoenolpyruvate. 3-phosphoshikimate is bound by residues serine 166, glutamine 168, aspartate 312, and lysine 339. Glutamine 168 lines the phosphoenolpyruvate pocket. Aspartate 312 serves as the catalytic Proton acceptor. Residues arginine 343 and arginine 385 each contribute to the phosphoenolpyruvate site.

The protein belongs to the EPSP synthase family. As to quaternary structure, monomer.

The protein localises to the cytoplasm. It catalyses the reaction 3-phosphoshikimate + phosphoenolpyruvate = 5-O-(1-carboxyvinyl)-3-phosphoshikimate + phosphate. It functions in the pathway metabolic intermediate biosynthesis; chorismate biosynthesis; chorismate from D-erythrose 4-phosphate and phosphoenolpyruvate: step 6/7. Its function is as follows. Catalyzes the transfer of the enolpyruvyl moiety of phosphoenolpyruvate (PEP) to the 5-hydroxyl of shikimate-3-phosphate (S3P) to produce enolpyruvyl shikimate-3-phosphate and inorganic phosphate. The protein is 3-phosphoshikimate 1-carboxyvinyltransferase of Streptococcus thermophilus (strain ATCC BAA-491 / LMD-9).